The following is a 938-amino-acid chain: Isoleucine--tRNA ligase (938 aa).

Positions 58-68 (PYANGSIHIGH) match the 'HIGH' region motif. Residue K183 is modified to N6-acetyllysine. E561 contacts L-isoleucyl-5'-AMP. Residues 602 to 606 (KMSKS) carry the 'KMSKS' region motif. K605 is a binding site for ATP. Zn(2+)-binding residues include C901, C904, C921, and C924.

Belongs to the class-I aminoacyl-tRNA synthetase family. IleS type 1 subfamily. In terms of assembly, monomer. The cofactor is Zn(2+).

It localises to the cytoplasm. The catalysed reaction is tRNA(Ile) + L-isoleucine + ATP = L-isoleucyl-tRNA(Ile) + AMP + diphosphate. In terms of biological role, catalyzes the attachment of isoleucine to tRNA(Ile). As IleRS can inadvertently accommodate and process structurally similar amino acids such as valine, to avoid such errors it has two additional distinct tRNA(Ile)-dependent editing activities. One activity is designated as 'pretransfer' editing and involves the hydrolysis of activated Val-AMP. The other activity is designated 'posttransfer' editing and involves deacylation of mischarged Val-tRNA(Ile). This chain is Isoleucine--tRNA ligase, found in Escherichia coli O7:K1 (strain IAI39 / ExPEC).